The chain runs to 328 residues: Tetraacyldisaccharide 4'-kinase (328 aa).

Residue 55–62 (TAGGNGKT) participates in ATP binding.

It belongs to the LpxK family.

It catalyses the reaction a lipid A disaccharide + ATP = a lipid IVA + ADP + H(+). It functions in the pathway glycolipid biosynthesis; lipid IV(A) biosynthesis; lipid IV(A) from (3R)-3-hydroxytetradecanoyl-[acyl-carrier-protein] and UDP-N-acetyl-alpha-D-glucosamine: step 6/6. Transfers the gamma-phosphate of ATP to the 4'-position of a tetraacyldisaccharide 1-phosphate intermediate (termed DS-1-P) to form tetraacyldisaccharide 1,4'-bis-phosphate (lipid IVA). The sequence is that of Tetraacyldisaccharide 4'-kinase from Shigella flexneri serotype 5b (strain 8401).